Reading from the N-terminus, the 423-residue chain is Serine hydroxymethyltransferase (423 aa).

(6S)-5,6,7,8-tetrahydrofolate-binding positions include Leu-120 and 124-126; that span reads GHL. Residue Lys-229 is modified to N6-(pyridoxal phosphate)lysine. A (6S)-5,6,7,8-tetrahydrofolate-binding site is contributed by 353-355; that stretch reads SPF.

The protein belongs to the SHMT family. Homodimer. Pyridoxal 5'-phosphate is required as a cofactor.

It localises to the cytoplasm. It catalyses the reaction (6R)-5,10-methylene-5,6,7,8-tetrahydrofolate + glycine + H2O = (6S)-5,6,7,8-tetrahydrofolate + L-serine. Its pathway is one-carbon metabolism; tetrahydrofolate interconversion. The protein operates within amino-acid biosynthesis; glycine biosynthesis; glycine from L-serine: step 1/1. In terms of biological role, catalyzes the reversible interconversion of serine and glycine with tetrahydrofolate (THF) serving as the one-carbon carrier. This reaction serves as the major source of one-carbon groups required for the biosynthesis of purines, thymidylate, methionine, and other important biomolecules. Also exhibits THF-independent aldolase activity toward beta-hydroxyamino acids, producing glycine and aldehydes, via a retro-aldol mechanism. This is Serine hydroxymethyltransferase from Prochlorococcus marinus (strain MIT 9515).